Reading from the N-terminus, the 672-residue chain is DNA polymerase eta (672 aa).

Positions 14–254 (IAHVDMDCFY…LPIKKMKQLG (241 aa)) constitute a UmuC domain. Residues Asp18 and Met19 each coordinate Mg(2+). Residues Asp18 and Met19 each coordinate Mn(2+). Positions 23 and 60 each coordinate a 2'-deoxyribonucleoside 5'-triphosphate. Mg(2+)-binding residues include Asp120 and Glu121. Residues Asp120 and Glu121 each coordinate Mn(2+). The active-site Proton acceptor is Glu121. DNA-binding regions lie at residues 318–325 (KTFPGPRA) and 362–383 (TLHA…PSKS). Disordered stretches follow at residues 521–617 (VSCP…TDWG) and 648–672 (QFNT…PLNR). 2 stretches are compositionally biased toward polar residues: residues 523–544 (CPSN…TQTK) and 570–586 (YNAT…DSTV). 2 stretches are compositionally biased toward low complexity: residues 587-602 (SSAS…SHNS) and 651-662 (TGKSKGDGSTSS).

Belongs to the DNA polymerase type-Y family. As to quaternary structure, interacts with PCNA1 and PCNA2. The interaction with PCNA2 is required for translesion synthesis (TLS) to repair UV photoproducts. Mg(2+) serves as cofactor. Mn(2+) is required as a cofactor. Constitutively expressed in roots, stems, leaves, flowers and siliques.

The protein localises to the nucleus. The catalysed reaction is DNA(n) + a 2'-deoxyribonucleoside 5'-triphosphate = DNA(n+1) + diphosphate. The enzyme in complex with the DNA substrate binds a third divalent metal cation. The binding of this third divalent cation, which is coordinated by water molecules and two oxygen atoms from DNA and dNTP, is essential for catalyzing the DNA synthesis. In terms of biological role, error-free DNA polymerase specifically involved in DNA repair. Plays an important role in translesion synthesis (TLS), where the normal high fidelity DNA polymerases cannot proceed and DNA synthesis stalls. Plays an important role in the repair of UV-induced pyrimidine dimers and confers resistance to ultraviolet light. Depending on the context, it inserts the correct base, but may cause base transitions and transversions. Forms a Schiff base with 5'-deoxyribose phosphate at abasic sites, but does not have lyase activity. Targets POLI to replication foci. Exhibits cyclobutane dimer nonmutagenic bypass activity in vitro. This Arabidopsis thaliana (Mouse-ear cress) protein is DNA polymerase eta (POLH).